We begin with the raw amino-acid sequence, 689 residues long: MTTQNFLAEIGTEELPPKALKKLATAFAENVENELNQAGLSFEKVEWFAAPRRLAVKALGLATAQPSKKIEKRGPAVSAAFDADGKPTKAAEGWARGCGISVEQAERLATDKGEWLVHRAVIEGQPTKNLLVDIISRSLANLPIPKMMRWGDKTEQFVRPVHTVTLFFGGELIEGEILGVKIANVVRGHRFLGEREFTISHADEYLTALREKGSVIADFNERKALILAKSQEKATALGGVADIEEDLLDEVTSLVEFPNVLTAKFEERFLAVPAEALVYTMKGDQKYFPIYDKDGKLLPHFIFVSNINPEDPTAIIEGNEKVVRPRLTDAEFFFKTDLKQRLEDRLPRLETVLFQQQLGTLRDKTARIEALAGEIAAQIGADKAKAERAGLLSKCDLMTNMVFEFTDTQGVMGMHYARHDGEDEEVAVALNEQYMPRFAGDELPKSLVACSVALADKFDTLTGIFGIGQAPKGSADPFALRRAALGSLRIIVEKNLPLDLEDLVRKSAALFGDKLTNANVVDDVVDFMLGRFRAWYQDEGIAVDVIQAVLARRPTKPADFDARVRAVSHFRTLDSAEALAAANKRVSNILAKVEGEISTEIDRSLLVEAEEKALAEQVISLQTELAPTFANGEYQTALDRLASLRETVDSFFEKVMVNAEDANLRRNRQAILNNLRNLFLQVADISVLQ.

This sequence belongs to the class-II aminoacyl-tRNA synthetase family. As to quaternary structure, tetramer of two alpha and two beta subunits.

The protein resides in the cytoplasm. It catalyses the reaction tRNA(Gly) + glycine + ATP = glycyl-tRNA(Gly) + AMP + diphosphate. In Actinobacillus pleuropneumoniae serotype 3 (strain JL03), this protein is Glycine--tRNA ligase beta subunit.